The following is a 365-amino-acid chain: Neuronal migration protein doublecortin (365 aa).

Ser-28 carries the post-translational modification Phosphoserine; by CDK5. Ser-47 is subject to Phosphoserine; by MARK1 and PKA. Doublecortin domains are found at residues 53–139 (KKVR…VEYT) and 180–263 (KLVT…AQDD). Tyr-70 is modified (phosphotyrosine; by ABL). Phosphoserine; by PKC is present on Ser-74. The residue at position 90 (Ser-90) is a Phosphoserine; by CK2. Ser-110 is subject to Phosphoserine; by PKC. Ser-115 carries the post-translational modification Phosphoserine; by CK2, MARK1 and PKA. Ser-265 carries the post-translational modification Phosphoserine; by CK2. The disordered stretch occupies residues 275 to 365 (KGNPSATAGP…DDSDSLGDSM (91 aa)). Ser-287 is subject to Phosphoserine; by CDK5. The residue at position 289 (Thr-289) is a Phosphothreonine; by CDK5. Ser-294 carries the phosphoserine; by PKC modification. Residue Ser-297 is modified to Phosphoserine; by CDK5. Residue Ser-306 is modified to Phosphoserine; by CK2. Ser-306 carries the phosphoserine; by DYRK2 modification. Over residues 307–341 (PADSGNDQDANGTSSSQLSTPKSKQSPISTPTSPG) the composition is skewed to polar residues. Thr-326 carries the post-translational modification Phosphothreonine; by CDK5. A Phosphothreonine; by PKC and MAPK modification is found at Thr-326. Ser-332 is subject to Phosphoserine; by CDK5. Ser-332 bears the Phosphoserine; by MAPK mark. Phosphothreonine; by MAPK is present on Thr-336. Ser-339 carries the phosphoserine; by CDK5 modification. Ser-339 carries the phosphoserine; by MAPK modification. Position 342 is a phosphoserine; by PKC (Ser-342). 2 positions are modified to phosphoserine; by CK2: Ser-354 and Ser-360. Residues 356 to 365 (DDSDSLGDSM) show a composition bias toward acidic residues.

In terms of assembly, interacts with tubulin. Interacts with USP9X. Post-translationally, phosphorylation by MARK1, MARK2 and PKA regulates its ability to bind microtubules. Phosphorylation at Ser-265 and Ser-297 seems to occur only in neonatal brain, the levels falling precipitously by postnatal day 21. Ubiquitinated by MDM2, leading to its degradation by the proteasome. Ubiquitinated by MDM2 and subsequent degradation leads to reduce the dendritic spine density of olfactory bulb granule cells.

It is found in the cytoplasm. The protein localises to the cell projection. It localises to the neuron projection. Its function is as follows. Microtubule-associated protein required for initial steps of neuronal dispersion and cortex lamination during cerebral cortex development. May act by competing with the putative neuronal protein kinase DCLK1 in binding to a target protein. May in that way participate in a signaling pathway that is crucial for neuronal interaction before and during migration, possibly as part of a calcium ion-dependent signal transduction pathway. May participate along with PAFAH1B1/LIS-1 in a distinct overlapping signaling pathway that promotes neuronal migration. This is Neuronal migration protein doublecortin (Dcx) from Rattus norvegicus (Rat).